Consider the following 258-residue polypeptide: MDADEPEILVTNDDGIDAPGIRALADGLDAVGNVTVVAPADNQSATGRAMSQEVAVHDHDLGYAVEGTPADCVVAGLEALGPYPDLVVSGVNEGGNLGMYVLGRSGTVSAAVEAAFFGVPAIAVSMYMREEQFGEPTAVADYEHAVDATTHLAHDAVTDGIFDTADYLNVNAPHPDADATGEMVVTRPSHAYDMTAAQTGDTVTLYDRLWEAMAAGDIHDPDGTDRRAVLDGHVSVSPLTAPHSTEHHDALDGIATEF.

A divalent metal cation contacts are provided by aspartate 13, aspartate 14, serine 44, and asparagine 92. A disordered region spans residues 237–258; it reads SPLTAPHSTEHHDALDGIATEF.

The protein belongs to the SurE nucleotidase family. Requires a divalent metal cation as cofactor.

The protein resides in the cytoplasm. It carries out the reaction a ribonucleoside 5'-phosphate + H2O = a ribonucleoside + phosphate. Its function is as follows. Nucleotidase that shows phosphatase activity on nucleoside 5'-monophosphates. The sequence is that of 5'-nucleotidase SurE from Halobacterium salinarum (strain ATCC 29341 / DSM 671 / R1).